We begin with the raw amino-acid sequence, 497 residues long: Glycerol kinase (497 aa).

T12 provides a ligand contact to ADP. ATP is bound by residues T12, T13, and S14. Residue T12 coordinates sn-glycerol 3-phosphate. Position 16 (R16) interacts with ADP. R82, E83, Y133, and D243 together coordinate sn-glycerol 3-phosphate. 5 residues coordinate glycerol: R82, E83, Y133, D243, and Q244. The ADP site is built by T265 and G308. T265, G308, Q312, and G409 together coordinate ATP. An ADP-binding site is contributed by G409.

The protein belongs to the FGGY kinase family.

It catalyses the reaction glycerol + ATP = sn-glycerol 3-phosphate + ADP + H(+). It participates in polyol metabolism; glycerol degradation via glycerol kinase pathway; sn-glycerol 3-phosphate from glycerol: step 1/1. Its activity is regulated as follows. Inhibited by fructose 1,6-bisphosphate (FBP). Its function is as follows. Key enzyme in the regulation of glycerol uptake and metabolism. Catalyzes the phosphorylation of glycerol to yield sn-glycerol 3-phosphate. This Dichelobacter nodosus (strain VCS1703A) protein is Glycerol kinase.